The chain runs to 102 residues: Small ribosomal subunit protein eS24 (102 aa).

It belongs to the eukaryotic ribosomal protein eS24 family.

This chain is Small ribosomal subunit protein eS24 (rps24e), found in Haloarcula marismortui (strain ATCC 43049 / DSM 3752 / JCM 8966 / VKM B-1809) (Halobacterium marismortui).